Reading from the N-terminus, the 295-residue chain is Acetaldehyde dehydrogenase (295 aa).

11-14 (SGNI) provides a ligand contact to NAD(+). The Acyl-thioester intermediate role is filled by C127. Residues 158-166 (SAGPGTRAN) and N270 each bind NAD(+).

It belongs to the acetaldehyde dehydrogenase family.

The catalysed reaction is acetaldehyde + NAD(+) + CoA = acetyl-CoA + NADH + H(+). In Geobacillus thermodenitrificans (strain NG80-2), this protein is Acetaldehyde dehydrogenase (nbaJ).